A 429-amino-acid polypeptide reads, in one-letter code: 4-hydroxy-3-methylbut-2-en-1-yl diphosphate synthase (flavodoxin) (429 aa).

The [4Fe-4S] cluster site is built by C310, C313, C356, and E363.

The protein belongs to the IspG family. [4Fe-4S] cluster serves as cofactor.

It carries out the reaction (2E)-4-hydroxy-3-methylbut-2-enyl diphosphate + oxidized [flavodoxin] + H2O + 2 H(+) = 2-C-methyl-D-erythritol 2,4-cyclic diphosphate + reduced [flavodoxin]. The protein operates within isoprenoid biosynthesis; isopentenyl diphosphate biosynthesis via DXP pathway; isopentenyl diphosphate from 1-deoxy-D-xylulose 5-phosphate: step 5/6. In terms of biological role, converts 2C-methyl-D-erythritol 2,4-cyclodiphosphate (ME-2,4cPP) into 1-hydroxy-2-methyl-2-(E)-butenyl 4-diphosphate. This chain is 4-hydroxy-3-methylbut-2-en-1-yl diphosphate synthase (flavodoxin), found in Bradyrhizobium sp. (strain BTAi1 / ATCC BAA-1182).